A 379-amino-acid polypeptide reads, in one-letter code: Inositol 3-kinase (379 aa).

ATP is bound by residues S217, 267–270, and N294; that span reads GAGD. The active-site Proton acceptor is the D270.

The protein belongs to the carbohydrate kinase pfkB family.

The catalysed reaction is myo-inositol + ATP = 1D-myo-inositol 3-phosphate + ADP + H(+). Its function is as follows. Kinase that phosphorylates myo-inositol to produce multiple myo-inositol monophosphates, Ins(1)P, Ins(3)P, Ins(4)P, Ins(5)P and Ins(6)P. Participates in phytic acid biosynthesis in developing seeds. Phytic acid is the primary storage form of phosphorus in cereal grains and other plant seeds. This is Inositol 3-kinase from Zea mays (Maize).